The primary structure comprises 262 residues: Carbonic anhydrase 13 (262 aa).

In terms of domain architecture, Alpha-carbonic anhydrase spans 4–261 (LSWGYGEHNG…LKGRRVRASF (258 aa)). His-65 acts as the Proton donor/acceptor in catalysis. Zn(2+)-binding residues include His-95, His-97, and His-120. Residue 200–201 (TV) coordinates substrate.

The protein belongs to the alpha-carbonic anhydrase family. Requires Zn(2+) as cofactor. As to expression, expressed in spleen, lung, kidney, heart, brain, skeletal muscle and testis.

The catalysed reaction is hydrogencarbonate + H(+) = CO2 + H2O. Its activity is regulated as follows. Inhibited by coumarins, sulfonamide derivatives such as acetazolamide (AZA) and Foscarnet (phosphonoformate trisodium salt). Its function is as follows. Reversible hydration of carbon dioxide. This Mus musculus (Mouse) protein is Carbonic anhydrase 13 (Ca13).